The primary structure comprises 142 residues: Large ribosomal subunit protein uL11 (142 aa).

This sequence belongs to the universal ribosomal protein uL11 family. Part of the ribosomal stalk of the 50S ribosomal subunit. Interacts with L10 and the large rRNA to form the base of the stalk. L10 forms an elongated spine to which L12 dimers bind in a sequential fashion forming a multimeric L10(L12)X complex. In terms of processing, one or more lysine residues are methylated.

In terms of biological role, forms part of the ribosomal stalk which helps the ribosome interact with GTP-bound translation factors. This chain is Large ribosomal subunit protein uL11, found in Shigella boydii serotype 4 (strain Sb227).